The sequence spans 187 residues: MAYSMSDLKKGLKVEIEGVPYKIVEYQHVKPGKGAAFVRVKMKSFFDGRVLEKTFHAGDKCEEPNLQEKNMQYLYHDGDHFQFMDVESYEQIALSDEQVGDVAKWMTDGMTVSILFHNNKAISVDVPQVVELKITETPPNFKGDTSSGSKKPATLETGAVIQIPYHVLEGDVVRVNTELGEYIEKVK.

Belongs to the elongation factor P family.

Its subcellular location is the cytoplasm. It participates in protein biosynthesis; polypeptide chain elongation. Involved in peptide bond synthesis. Stimulates efficient translation and peptide-bond synthesis on native or reconstituted 70S ribosomes in vitro. Probably functions indirectly by altering the affinity of the ribosome for aminoacyl-tRNA, thus increasing their reactivity as acceptors for peptidyl transferase. This Wolinella succinogenes (strain ATCC 29543 / DSM 1740 / CCUG 13145 / JCM 31913 / LMG 7466 / NCTC 11488 / FDC 602W) (Vibrio succinogenes) protein is Elongation factor P.